The sequence spans 134 residues: Aspartate 1-decarboxylase (134 aa).

The Schiff-base intermediate with substrate; via pyruvic acid role is filled by S25. A Pyruvic acid (Ser) modification is found at S25. T57 contributes to the substrate binding site. Catalysis depends on Y58, which acts as the Proton donor. 73–75 (GAA) serves as a coordination point for substrate.

The protein belongs to the PanD family. Heterooctamer of four alpha and four beta subunits. It depends on pyruvate as a cofactor. Post-translationally, is synthesized initially as an inactive proenzyme, which is activated by self-cleavage at a specific serine bond to produce a beta-subunit with a hydroxyl group at its C-terminus and an alpha-subunit with a pyruvoyl group at its N-terminus.

The protein resides in the cytoplasm. The catalysed reaction is L-aspartate + H(+) = beta-alanine + CO2. The protein operates within cofactor biosynthesis; (R)-pantothenate biosynthesis; beta-alanine from L-aspartate: step 1/1. Catalyzes the pyruvoyl-dependent decarboxylation of aspartate to produce beta-alanine. This Geobacter sp. (strain M21) protein is Aspartate 1-decarboxylase.